The following is an 863-amino-acid chain: Leucine--tRNA ligase (863 aa).

A 'HIGH' region motif is present at residues 42–52 (PYPSGKIHMGH). A 'KMSKS' region motif is present at residues 618-622 (KMSKS). Lys-621 contributes to the ATP binding site.

Belongs to the class-I aminoacyl-tRNA synthetase family.

The protein resides in the cytoplasm. It carries out the reaction tRNA(Leu) + L-leucine + ATP = L-leucyl-tRNA(Leu) + AMP + diphosphate. In Desulfatibacillum aliphaticivorans, this protein is Leucine--tRNA ligase.